The sequence spans 160 residues: 6,7-dimethyl-8-ribityllumazine synthase (160 aa).

5-amino-6-(D-ribitylamino)uracil is bound by residues Phe23, Ser61 to Glu63, and Ala85 to Ile87. Asp90 to Thr91 serves as a coordination point for (2S)-2-hydroxy-3-oxobutyl phosphate. The active-site Proton donor is His93. Residue Phe118 participates in 5-amino-6-(D-ribitylamino)uracil binding. Residue Arg132 participates in (2S)-2-hydroxy-3-oxobutyl phosphate binding.

This sequence belongs to the DMRL synthase family.

The catalysed reaction is (2S)-2-hydroxy-3-oxobutyl phosphate + 5-amino-6-(D-ribitylamino)uracil = 6,7-dimethyl-8-(1-D-ribityl)lumazine + phosphate + 2 H2O + H(+). It functions in the pathway cofactor biosynthesis; riboflavin biosynthesis; riboflavin from 2-hydroxy-3-oxobutyl phosphate and 5-amino-6-(D-ribitylamino)uracil: step 1/2. Its function is as follows. Catalyzes the formation of 6,7-dimethyl-8-ribityllumazine by condensation of 5-amino-6-(D-ribitylamino)uracil with 3,4-dihydroxy-2-butanone 4-phosphate. This is the penultimate step in the biosynthesis of riboflavin. The chain is 6,7-dimethyl-8-ribityllumazine synthase from Parasynechococcus marenigrum (strain WH8102).